Consider the following 113-residue polypeptide: UPF0122 protein LSEI_1603 (113 aa).

It belongs to the UPF0122 family.

Its function is as follows. Might take part in the signal recognition particle (SRP) pathway. This is inferred from the conservation of its genetic proximity to ftsY/ffh. May be a regulatory protein. The polypeptide is UPF0122 protein LSEI_1603 (Lacticaseibacillus paracasei (strain ATCC 334 / BCRC 17002 / CCUG 31169 / CIP 107868 / KCTC 3260 / NRRL B-441) (Lactobacillus paracasei)).